The chain runs to 345 residues: Phosphoribosylformylglycinamidine cyclo-ligase (345 aa).

The protein belongs to the AIR synthase family.

It is found in the cytoplasm. It catalyses the reaction 2-formamido-N(1)-(5-O-phospho-beta-D-ribosyl)acetamidine + ATP = 5-amino-1-(5-phospho-beta-D-ribosyl)imidazole + ADP + phosphate + H(+). Its pathway is purine metabolism; IMP biosynthesis via de novo pathway; 5-amino-1-(5-phospho-D-ribosyl)imidazole from N(2)-formyl-N(1)-(5-phospho-D-ribosyl)glycinamide: step 2/2. This is Phosphoribosylformylglycinamidine cyclo-ligase from Tolumonas auensis (strain DSM 9187 / NBRC 110442 / TA 4).